We begin with the raw amino-acid sequence, 497 residues long: Glycerol kinase (497 aa).

Residue Thr-12 coordinates ADP. Thr-12, Thr-13, and Ser-14 together coordinate ATP. Thr-12 is a binding site for sn-glycerol 3-phosphate. Arg-16 contacts ADP. 4 residues coordinate sn-glycerol 3-phosphate: Arg-82, Glu-83, Tyr-134, and Asp-243. Arg-82, Glu-83, Tyr-134, Asp-243, and Gln-244 together coordinate glycerol. Positions 265 and 308 each coordinate ADP. Residues Thr-265, Gly-308, Gln-312, and Gly-411 each coordinate ATP. Gly-411 is an ADP binding site.

It belongs to the FGGY kinase family.

The catalysed reaction is glycerol + ATP = sn-glycerol 3-phosphate + ADP + H(+). It participates in polyol metabolism; glycerol degradation via glycerol kinase pathway; sn-glycerol 3-phosphate from glycerol: step 1/1. With respect to regulation, inhibited by fructose 1,6-bisphosphate (FBP). Key enzyme in the regulation of glycerol uptake and metabolism. Catalyzes the phosphorylation of glycerol to yield sn-glycerol 3-phosphate. The protein is Glycerol kinase of Sinorhizobium fredii (strain NBRC 101917 / NGR234).